The following is a 190-amino-acid chain: Protein LZIC (190 aa).

Positions 6-64 (TTETSKLKQNLEEQLDRLMQQLQDLEECREELDADEYEETKKETLEQLSEINDSLKKIM) form a coiled coil.

Belongs to the CTNNBIP1 family. In terms of assembly, does not interact with CTNNB1.

The protein is Protein LZIC (LZIC) of Gallus gallus (Chicken).